We begin with the raw amino-acid sequence, 368 residues long: Protein trichome birefringence-like 43 (368 aa).

A helical; Signal-anchor for type II membrane protein membrane pass occupies residues G9–I25. Residues G117–S119 carry the GDS motif motif. The DCXHWCLPGXXDXWN motif motif lies at D344–N358.

Belongs to the PC-esterase family. TBL subfamily.

The protein localises to the membrane. Its function is as follows. May act as a bridging protein that binds pectin and other cell wall polysaccharides. Probably involved in maintaining esterification of pectins. May be involved in the specific O-acetylation of cell wall polymers. The chain is Protein trichome birefringence-like 43 (TBL43) from Arabidopsis thaliana (Mouse-ear cress).